We begin with the raw amino-acid sequence, 574 residues long: Eukaryotic translation initiation factor 3 subunit D (574 aa).

Positions 153–178 (QRRGGNARQGQRGQGGRFGGDRPKER) are disordered. A compositionally biased stretch (low complexity) spans 154-163 (RRGGNARQGQ). Positions 312–326 (PVETLTVSETSAEPP) are RNA gate. A disordered region spans residues 555-574 (EGTFDSERESSEEENSDDDQ). Over residues 564 to 574 (SSEEENSDDDQ) the composition is skewed to acidic residues.

This sequence belongs to the eIF-3 subunit D family. As to quaternary structure, component of the eukaryotic translation initiation factor 3 (eIF-3) complex.

It is found in the cytoplasm. MRNA cap-binding component of the eukaryotic translation initiation factor 3 (eIF-3) complex, which is involved in protein synthesis of a specialized repertoire of mRNAs and, together with other initiation factors, stimulates binding of mRNA and methionyl-tRNAi to the 40S ribosome. The eIF-3 complex specifically targets and initiates translation of a subset of mRNAs involved in cell proliferation. In the eIF-3 complex, eif3d specifically recognizes and binds the 7-methylguanosine cap of a subset of mRNAs. The sequence is that of Eukaryotic translation initiation factor 3 subunit D from Caenorhabditis briggsae.